Consider the following 614-residue polypeptide: GPI transamidase component GAA1 (614 aa).

At 1 to 19 the chain is on the cytoplasmic side; the sequence is MALLEKLHRRIVDMGLVPR. A helical transmembrane segment spans residues 20–40; it reads IIALLPVISMLCALFGFISIA. The Lumenal segment spans residues 41–356; sequence ILPMDGQYRR…APRQFVSISS (316 aa). Residue Asn-87 is glycosylated (N-linked (GlcNAc...) asparagine). The helical transmembrane segment at 357-377 threads the bilayer; it reads YLPSAVALSIAFAISSLNAFI. Topologically, residues 378–394 are cytoplasmic; sequence NNAYANISLFSEYNLVA. A helical membrane pass occupies residues 395–415; the sequence is LLVWFVSLVISFVVSQAFLLI. The Lumenal segment spans residues 416 to 464; the sequence is PSSGLLMTISMASCFLPLILSRKIHISEPLSYRLKNVAFLYFSLVSTSL. The chain crosses the membrane as a helical span at residues 465–485; it reads LMINFAMALLIGTLAFPMTFV. Over 486–535 the chain is Cytoplasmic; that stretch reads KTIVESSSEHEVTTQSSNPIKTEPKDEIELVENHMDTTPATPQQQKQKLK. The helical transmembrane segment at 536–556 threads the bilayer; sequence NLVLLILTNPFISITLFGLFF. The Lumenal segment spans residues 557 to 577; the sequence is DDEFHGFDIINKLVSAWLDLK. A helical membrane pass occupies residues 578–598; sequence CWSWFVLCIGWLPCWLLILAS. Residues 599–614 are Cytoplasmic-facing; sequence SFESKSVVVRSKEKQS. Positions 610-614 match the Prevents secretion from ER motif; sequence KEKQS.

In terms of assembly, forms a complex with CDC91, GPI17, GPI16 and GPI8.

Its subcellular location is the endoplasmic reticulum membrane. Its pathway is glycolipid biosynthesis; glycosylphosphatidylinositol-anchor biosynthesis. Its function is as follows. Component of the GPI transamidase complex. Required for a terminal step of GPI anchor attachment onto proteins. Affects endocytosis. The polypeptide is GPI transamidase component GAA1 (GAA1) (Saccharomyces cerevisiae (strain ATCC 204508 / S288c) (Baker's yeast)).